Consider the following 257-residue polypeptide: Probable amino-acid ABC transporter ATP-binding protein y4tH (257 aa).

The region spanning Ile6–Leu251 is the ABC transporter domain. Gly38–Ser45 is an ATP binding site.

This sequence belongs to the ABC transporter superfamily.

It is found in the cell inner membrane. Probably part of a binding-protein-dependent transport system y4tEFGH for an amino acid. Probably responsible for energy coupling to the transport system. The polypeptide is Probable amino-acid ABC transporter ATP-binding protein y4tH (Sinorhizobium fredii (strain NBRC 101917 / NGR234)).